A 361-amino-acid polypeptide reads, in one-letter code: Probable cinnamyl alcohol dehydrogenase (361 aa).

Cysteine 48 is a binding site for Zn(2+). Residue threonine 50 coordinates NADP(+). The Zn(2+) site is built by histidine 70, glutamate 71, cysteine 101, cysteine 104, cysteine 107, cysteine 115, and cysteine 164. NADP(+) contacts are provided by residues threonine 168, 189 to 194 (GLGGVG), 212 to 217 (SSSDKK), threonine 252, glycine 276, and 299 to 301 (SFI).

This sequence belongs to the zinc-containing alcohol dehydrogenase family. As to quaternary structure, homodimer. Requires Zn(2+) as cofactor.

The enzyme catalyses (E)-cinnamyl alcohol + NADP(+) = (E)-cinnamaldehyde + NADPH + H(+). It catalyses the reaction (E)-coniferol + NADP(+) = (E)-coniferaldehyde + NADPH + H(+). It carries out the reaction (E)-sinapyl alcohol + NADP(+) = (E)-sinapaldehyde + NADPH + H(+). The catalysed reaction is (E)-4-coumaroyl alcohol + NADP(+) = (E)-4-coumaraldehyde + NADPH + H(+). The enzyme catalyses (E)-caffeyl alcohol + NADP(+) = (E)-caffeyl aldehyde + NADPH + H(+). It participates in aromatic compound metabolism; phenylpropanoid biosynthesis. Its function is as follows. Involved in lignin biosynthesis. Catalyzes the final step specific for the production of lignin monomers. Catalyzes the NADPH-dependent reduction of coniferaldehyde, 5-hydroxyconiferaldehyde, sinapaldehyde, 4-coumaraldehyde and caffeyl aldehyde to their respective alcohols. In Lolium perenne (Perennial ryegrass), this protein is Probable cinnamyl alcohol dehydrogenase.